The primary structure comprises 243 residues: R-spondin-2 (243 aa).

An N-terminal signal peptide occupies residues 1–21 (MQFQLFSFVLIILNCVDYSHC). 11 disulfide bridges follow: Cys40/Cys46, Cys43/Cys52, Cys55/Cys74, Cys78/Cys93, Cys96/Cys104, Cys101/Cys110, Cys113/Cys124, Cys128/Cys141, Cys145/Cys187, Cys156/Cys163, and Cys196/Cys203. Residues 90–134 (MNRCSRCRIENCDSCFSRDFCIKCKSGFYSHKGQCFEECPEGFAP) form an FU repeat. One can recognise a TSP type-1 domain in the interval 144-204 (GCEVGPWSEW…RCKMAMRHCP (61 aa)). N-linked (GlcNAc...) asparagine glycosylation is present at Asn160. The disordered stretch occupies residues 202-243 (HCPGGTRTTKKKDKKNKKKKKKLLERAQEQHSVVLATDRSSQ). Over residues 209 to 224 (TTKKKDKKNKKKKKKL) the composition is skewed to basic residues.

It belongs to the R-spondin family. As to quaternary structure, binds heparin.

The protein localises to the secreted. Functionally, activator of the canonical Wnt signaling pathway by acting as a ligand for lgr4-6 receptors. Upon binding to lgr4-6 (lgr4, lgr5 or lgr6), lgr4-6 associate with phosphorylated lrp6 and frizzled receptors that are activated by extracellular Wnt receptors, triggering the canonical Wnt signaling pathway to increase expression of target genes. Acts both in the canonical. Wnt/beta-catenin-dependent pathway and in non-canonical Wnt signaling pathway. Activates neural markers and promotes muscle formation. Overexpression blocks activin, nodal and BMP4 signaling, suggesting that it may negatively regulate the TGF-beta pathway. During embryonic development, plays a crucial role in limb specification, amplifying the Wnt signaling pathway independently of LGR4-6 receptors, possibly by acting as a direct antagonistic ligand to RNF43 and ZNRF3, hence governing the number of limbs an embryo should form. This is R-spondin-2 (rspo2) from Xenopus tropicalis (Western clawed frog).